A 206-amino-acid polypeptide reads, in one-letter code: Proteasome subunit beta type-2 (206 aa).

Belongs to the peptidase T1B family. As to quaternary structure, the 26S proteasome consists of a 20S proteasome core and two 19S regulatory subunits. The 20S proteasome core is composed of 28 subunits that are arranged in four stacked rings, resulting in a barrel-shaped structure. The two end rings are each formed by seven alpha subunits, and the two central rings are each formed by seven beta subunits. The catalytic chamber with the active sites is on the inside of the barrel.

Its subcellular location is the cytoplasm. It localises to the nucleus. Non-catalytic component of the proteasome, a multicatalytic proteinase complex which is characterized by its ability to cleave peptides with Arg, Phe, Tyr, Leu, and Glu adjacent to the leaving group at neutral or slightly basic pH. The proteasome has an ATP-dependent proteolytic activity. The chain is Proteasome subunit beta type-2 (PSB4) from Trypanosoma brucei brucei.